The primary structure comprises 295 residues: MPIFKGSGVALITPFKDEESVDFEVLGRLVDFHLEHKTDAIIVCGTTGEPSTMPDDEHLEVIRFVIDRVAGRKPVIAGVGSNHTKHAVYLSKKAQELGADGLLHVTPYYNKTTQKGLIEHFKEINDAVSIPIIVYNVPSRTGLNILPETMKELSKLPNIRAIKEASGNITQVAEIAMLCPDIDIYSGNDDQIVPVLSVGGIGVISVLANILPDETHDIVEYFLNGQVEKAKELQLKLLPIIKALFIEVNPIPVKEAMNMMGFNVGRPRLPLTTMTEKNREILKKALIDYGINIKE.

Residue Thr-47 participates in pyruvate binding. Residue Tyr-135 is the Proton donor/acceptor of the active site. Lys-163 acts as the Schiff-base intermediate with substrate in catalysis. Ile-204 contributes to the pyruvate binding site.

This sequence belongs to the DapA family. In terms of assembly, homotetramer; dimer of dimers.

The protein localises to the cytoplasm. The enzyme catalyses L-aspartate 4-semialdehyde + pyruvate = (2S,4S)-4-hydroxy-2,3,4,5-tetrahydrodipicolinate + H2O + H(+). It functions in the pathway amino-acid biosynthesis; L-lysine biosynthesis via DAP pathway; (S)-tetrahydrodipicolinate from L-aspartate: step 3/4. In terms of biological role, catalyzes the condensation of (S)-aspartate-beta-semialdehyde [(S)-ASA] and pyruvate to 4-hydroxy-tetrahydrodipicolinate (HTPA). The sequence is that of 4-hydroxy-tetrahydrodipicolinate synthase from Caldicellulosiruptor saccharolyticus (strain ATCC 43494 / DSM 8903 / Tp8T 6331).